The chain runs to 498 residues: ATP synthase subunit beta, chloroplastic (498 aa).

Position 172–179 (Gly172–Thr179) interacts with ATP.

This sequence belongs to the ATPase alpha/beta chains family. In terms of assembly, F-type ATPases have 2 components, CF(1) - the catalytic core - and CF(0) - the membrane proton channel. CF(1) has five subunits: alpha(3), beta(3), gamma(1), delta(1), epsilon(1). CF(0) has four main subunits: a(1), b(1), b'(1) and c(9-12).

The protein localises to the plastid. It is found in the chloroplast thylakoid membrane. It catalyses the reaction ATP + H2O + 4 H(+)(in) = ADP + phosphate + 5 H(+)(out). Produces ATP from ADP in the presence of a proton gradient across the membrane. The catalytic sites are hosted primarily by the beta subunits. The protein is ATP synthase subunit beta, chloroplastic of Populus trichocarpa (Western balsam poplar).